The sequence spans 505 residues: Peroxisome proliferator-activated receptor gamma (505 aa).

O-linked (GlcNAc) threonine glycosylation is present at Thr84. The residue at position 112 (Ser112) is a Phosphoserine; by MAPK. The segment at residues 136–210 (AIECRVCGDK…VGMSHNAIRF (75 aa)) is a DNA-binding region (nuclear receptor). NR C4-type zinc fingers lie at residues 139-159 (CRVC…CEGC) and 176-198 (CDLN…FQKC). Residues 205 to 280 (HNAIRFGRMP…DKSPFVIYDM (76 aa)) are interaction with FAM120B. The region spanning 238–503 (DLRALAKHLY…HPLLQEIYKD (266 aa)) is the NR LBD domain. Lys252 participates in a covalent cross-link: Glycyl lysine isopeptide (Lys-Gly) (interchain with G-Cter in ubiquitin). A 9aaTAD motif is present at residues 495 to 503 (PLLQEIYKD).

This sequence belongs to the nuclear hormone receptor family. NR1 subfamily. In terms of assembly, interacts with FOXO1 (acetylated form). Heterodimer with other nuclear receptors, such as RXRA. The heterodimer with the retinoic acid receptor RXRA is called adipocyte-specific transcription factor ARF6. Interacts with NCOA6 coactivator, leading to a strong increase in transcription of target genes. Interacts with coactivator PPARBP, leading to a mild increase in transcription of target genes. Interacts with NOCA7 in a ligand-inducible manner. Interacts with NCOA1 and NCOA2 LXXLL motifs. Interacts with ASXL1, ASXL2, DNTTIP2, FAM120B, MAP2K1/MEK1, NR0B2, PDPK1, PRDM16, PRMT2 and TGFB1I1. Interacts (when activated by agonist) with PPP5C. Interacts with HELZ2 and THRAP3; the interaction stimulates the transcriptional activity of PPARG. Interacts with PER2, the interaction is ligand dependent and blocks PPARG recruitment to target promoters. Interacts with NOCT. Interacts with ACTN4. Interacts (when in the liganded conformation) with GPS2. Interacts with CRY1 and CRY2 in a ligand-dependent manner. In the absence of hormonal ligand, interacts with TACC1. In macrophages, interacts with PAQR3 and STUB1; the interactions promote PPARG poylubiquitination and STUB1-mediated degradation. Post-translationally, phosphorylated by MAPK. The phosphorylation inhibits PPAR gamma activity. In terms of processing, O-GlcNAcylation at Thr-84 reduces transcriptional activity in adipocytes. Phosphorylated at basal conditions and dephosphorylated when treated with the ligand. May be dephosphorylated by PPP5C. The phosphorylated form may be inactive and dephosphorylation at induces adipogenic activity. Post-translationally, ubiquitinated by E3 ubiquitin-protein ligase complex containing FBXO9; leading to proteasomal degradation. Ubiquitinated at Lys-252 by TRIM55 leading to proteasomal degradation. Ubiquitinated by E3 ubiquitin-protein ligase STUB1/CHIP; leading to proteasomal degradation. As to expression, highest expression in adipose tissue.

The protein resides in the nucleus. Its subcellular location is the cytoplasm. PDPK1 activates its transcriptional activity independently of its kinase activity. In terms of biological role, nuclear receptor that binds peroxisome proliferators such as hypolipidemic drugs and fatty acids. Once activated by a ligand, the nuclear receptor binds to DNA specific PPAR response elements (PPRE) and modulates the transcription of its target genes, such as acyl-CoA oxidase. It therefore controls the peroxisomal beta-oxidation pathway of fatty acids. Key regulator of adipocyte differentiation and glucose homeostasis. ARF6 acts as a key regulator of the tissue-specific adipocyte P2 (aP2) enhancer. Acts as a critical regulator of gut homeostasis by suppressing NF-kappa-B-mediated pro-inflammatory responses. Plays a role in the regulation of cardiovascular circadian rhythms by regulating the transcription of BMAL1 in the blood vessels. This chain is Peroxisome proliferator-activated receptor gamma (Pparg), found in Rattus norvegicus (Rat).